We begin with the raw amino-acid sequence, 153 residues long: Ribosomal RNA large subunit methyltransferase H (153 aa).

S-adenosyl-L-methionine-binding positions include leucine 75, glycine 102, and 121–126 (LSPLTM).

This sequence belongs to the RNA methyltransferase RlmH family. As to quaternary structure, homodimer.

The protein localises to the cytoplasm. The enzyme catalyses pseudouridine(1915) in 23S rRNA + S-adenosyl-L-methionine = N(3)-methylpseudouridine(1915) in 23S rRNA + S-adenosyl-L-homocysteine + H(+). In terms of biological role, specifically methylates the pseudouridine at position 1915 (m3Psi1915) in 23S rRNA. The sequence is that of Ribosomal RNA large subunit methyltransferase H from Nitratiruptor sp. (strain SB155-2).